A 607-amino-acid chain; its full sequence is Chaperone protein DnaK (607 aa).

A Phosphothreonine; by autocatalysis modification is found at Thr-174. Positions 577–607 are disordered; it reads GYTASGPQGGPNPGGGQSGPDGNVNTDYKVY. The span at 583 to 595 shows a compositional bias: gly residues; the sequence is PQGGPNPGGGQSG.

Belongs to the heat shock protein 70 family.

In terms of biological role, acts as a chaperone. The sequence is that of Chaperone protein DnaK from Caldicellulosiruptor bescii (strain ATCC BAA-1888 / DSM 6725 / KCTC 15123 / Z-1320) (Anaerocellum thermophilum).